A 154-amino-acid chain; its full sequence is 6,7-dimethyl-8-ribityllumazine synthase (154 aa).

5-amino-6-(D-ribitylamino)uracil is bound by residues Phe21, 55–57 (AFE), and 79–81 (CVI). 84–85 (AT) is a binding site for (2S)-2-hydroxy-3-oxobutyl phosphate. His87 functions as the Proton donor in the catalytic mechanism. Position 112 (Phe112) interacts with 5-amino-6-(D-ribitylamino)uracil. Arg126 is a binding site for (2S)-2-hydroxy-3-oxobutyl phosphate.

It belongs to the DMRL synthase family. As to quaternary structure, forms an icosahedral capsid composed of 60 subunits, arranged as a dodecamer of pentamers.

The catalysed reaction is (2S)-2-hydroxy-3-oxobutyl phosphate + 5-amino-6-(D-ribitylamino)uracil = 6,7-dimethyl-8-(1-D-ribityl)lumazine + phosphate + 2 H2O + H(+). It participates in cofactor biosynthesis; riboflavin biosynthesis; riboflavin from 2-hydroxy-3-oxobutyl phosphate and 5-amino-6-(D-ribitylamino)uracil: step 1/2. In terms of biological role, catalyzes the formation of 6,7-dimethyl-8-ribityllumazine by condensation of 5-amino-6-(D-ribitylamino)uracil with 3,4-dihydroxy-2-butanone 4-phosphate. This is the penultimate step in the biosynthesis of riboflavin. The sequence is that of 6,7-dimethyl-8-ribityllumazine synthase from Staphylococcus aureus (strain Mu50 / ATCC 700699).